The sequence spans 883 residues: Mitogen-activated protein kinase kinase kinase YODA (883 aa).

Disordered stretches follow at residues 28–193 (GFAS…AEMF), 303–364 (CSPE…PPLL), and 376–396 (SAATSPSVPRSPARAEATVSP). Positions 57–72 (SRLPSRSPSPSTRVSR) are enriched in low complexity. Positions 94–105 (VTSTDSGMNGSQ) are enriched in polar residues. Low complexity predominate over residues 143–165 (SVSSGSSVGDIPSDSLLSPLASD). Polar residues-rich tracts occupy residues 167 to 189 (ENGNRTPVNISSRDQSMHSNKNS) and 314 to 328 (RMTSPGPSSRIQSGA). The 257-residue stretch at 400 to 656 (WKKGRLLGMG…AAQLLDHAFV (257 aa)) folds into the Protein kinase domain. ATP is bound by residues 406 to 414 (LGMGSFGHV) and Lys-429. The active-site Proton acceptor is Asp-525. 2 disordered regions span residues 712–773 (GSGF…GAIP) and 787–838 (EGIG…IQPG). Residues 733 to 756 (SPIFHSHSPHISGRRSPSPISSPH) show a composition bias toward low complexity.

The protein belongs to the protein kinase superfamily. STE Ser/Thr protein kinase family. MAP kinase kinase kinase subfamily. Interacts with ASK7. Interacts with BSK12/SSP. Binds to BASL and MPK6. Expressed in roots, leaves, guard cells, stems, flowers and siliques.

The protein resides in the cytoplasm. It is found in the cell cortex. The protein localises to the cell membrane. It catalyses the reaction L-seryl-[protein] + ATP = O-phospho-L-seryl-[protein] + ADP + H(+). The catalysed reaction is L-threonyl-[protein] + ATP = O-phospho-L-threonyl-[protein] + ADP + H(+). With respect to regulation, contains an N-terminal autoinhibitory domain. Functionally, functions in a MAP kinase cascade that acts as a molecular switch to regulate the first cell fate decisions in the zygote and the early embryo. Promotes elongation of the zygote and development of its basal daughter cell into the extra-embryonic suspensor. In stomatal development, acts downstream of the LRR receptor TMM, but upstream of the MKK4/MKK5-MPK3/MPK6 module to regulate stomatal cell fate before the guard mother cell (GMC) is specified. Plays a central role in both guard cell identity and pattern formation. This MAPK cascade also functions downstream of the ER receptor in regulating coordinated local cell proliferation, which shapes the morphology of plant organs. Upon brassinosteroid signaling, is inhibited by phosphorylation of its auto-inhibitory N-terminal domain by the GSK3-like kinase ASK7. In Arabidopsis thaliana (Mouse-ear cress), this protein is Mitogen-activated protein kinase kinase kinase YODA.